A 188-amino-acid polypeptide reads, in one-letter code: dTTP/UTP pyrophosphatase (188 aa).

The active-site Proton acceptor is the Asp70.

The protein belongs to the Maf family. YhdE subfamily. The cofactor is a divalent metal cation.

It is found in the cytoplasm. The enzyme catalyses dTTP + H2O = dTMP + diphosphate + H(+). The catalysed reaction is UTP + H2O = UMP + diphosphate + H(+). Functionally, nucleoside triphosphate pyrophosphatase that hydrolyzes dTTP and UTP. May have a dual role in cell division arrest and in preventing the incorporation of modified nucleotides into cellular nucleic acids. The chain is dTTP/UTP pyrophosphatase from Clostridium beijerinckii (strain ATCC 51743 / NCIMB 8052) (Clostridium acetobutylicum).